Here is a 117-residue protein sequence, read N- to C-terminus: Ribonuclease P protein component 4 (117 aa).

Zn(2+) is bound by residues cysteine 63, cysteine 66, cysteine 92, and cysteine 95.

This sequence belongs to the eukaryotic/archaeal RNase P protein component 4 family. In terms of assembly, consists of a catalytic RNA component and at least 4 protein subunits. Forms a subcomplex with Rnp1 which stimulates the catalytic RNA. The cofactor is Zn(2+).

The protein localises to the cytoplasm. It carries out the reaction Endonucleolytic cleavage of RNA, removing 5'-extranucleotides from tRNA precursor.. In terms of biological role, part of ribonuclease P, a protein complex that generates mature tRNA molecules by cleaving their 5'-ends. The RNA is catalytic, but its KM for pre-tRNA is 170-fold decreased in the presence of the 4 known protein subunits (Rnp1-4). The protein subunits also decrease the amount of Mg(2+) needed for activity. This Pyrococcus furiosus (strain ATCC 43587 / DSM 3638 / JCM 8422 / Vc1) protein is Ribonuclease P protein component 4.